The chain runs to 119 residues: gSG7 salivary protein (119 aa).

2 cysteine pairs are disulfide-bonded: C58/C113 and C81/C91.

The protein localises to the secreted. Its activity is regulated as follows. The activity is increased in the presence of host properdin (CFP). Its function is as follows. Salivary protein that inhibits the alternative pathway of complement system activation in the host while having no inhibitory effect on the classical pathway. Inhibits activity of activated host C3-convertase complex C3bBb (C3-CFB). Enhances accumulation of C3bBb on immobilized properdin. In Anopheles freeborni (Western malaria mosquito), this protein is gSG7 salivary protein.